A 45-amino-acid polypeptide reads, in one-letter code: Photosystem II reaction center protein K (45 aa).

Residues 1-8 (METIYLLA) constitute a propeptide that is removed on maturation. Residues 16 to 40 (IFDPLVDVLPVIPLFFLALAFVWQA) traverse the membrane as a helical segment.

Belongs to the PsbK family. In terms of assembly, PSII is composed of 1 copy each of membrane proteins PsbA, PsbB, PsbC, PsbD, PsbE, PsbF, PsbH, PsbI, PsbJ, PsbK, PsbL, PsbM, PsbT, PsbX, PsbY, PsbZ, Psb30/Ycf12, peripheral proteins PsbO, CyanoQ (PsbQ), PsbU, PsbV and a large number of cofactors. It forms dimeric complexes.

The protein resides in the cellular thylakoid membrane. Functionally, one of the components of the core complex of photosystem II (PSII). PSII is a light-driven water:plastoquinone oxidoreductase that uses light energy to abstract electrons from H(2)O, generating O(2) and a proton gradient subsequently used for ATP formation. It consists of a core antenna complex that captures photons, and an electron transfer chain that converts photonic excitation into a charge separation. The sequence is that of Photosystem II reaction center protein K from Synechocystis sp. (strain ATCC 27184 / PCC 6803 / Kazusa).